The chain runs to 504 residues: ATP synthase subunit alpha (504 aa).

170–177 (GDRQTGKT) contributes to the ATP binding site.

It belongs to the ATPase alpha/beta chains family. In terms of assembly, F-type ATPases have 2 components, CF(1) - the catalytic core - and CF(0) - the membrane proton channel. CF(1) has five subunits: alpha(3), beta(3), gamma(1), delta(1), epsilon(1). CF(0) has four main subunits: a(1), b(1), b'(1) and c(9-12).

The protein resides in the cellular thylakoid membrane. The catalysed reaction is ATP + H2O + 4 H(+)(in) = ADP + phosphate + 5 H(+)(out). In terms of biological role, produces ATP from ADP in the presence of a proton gradient across the membrane. The alpha chain is a regulatory subunit. This chain is ATP synthase subunit alpha, found in Prochlorococcus marinus (strain NATL1A).